We begin with the raw amino-acid sequence, 259 residues long: Cobalt transport protein CbiM (259 aa).

Positions 1-25 (MFRRTTWLTLYLLLAMAALARPAFA) are cleaved as a signal peptide. A run of 6 helical transmembrane segments spans residues 31-51 (GFLP…FWIW), 68-88 (MLLG…LPSV), 100-120 (LGAV…VLLF), 132-152 (TLGA…YGLY), 160-180 (GSMP…TYVT), and 206-226 (IFAV…VIVF).

It belongs to the CbiM family. Forms an energy-coupling factor (ECF) transporter complex composed of an ATP-binding protein (A component, CbiO), a transmembrane protein (T component, CbiQ) and 2 possible substrate-capture proteins (S components, CbiM and CbiN) of unknown stoichimetry.

It is found in the cell membrane. The protein operates within cofactor biosynthesis; adenosylcobalamin biosynthesis. In terms of biological role, part of the energy-coupling factor (ECF) transporter complex CbiMNOQ involved in cobalt import. The chain is Cobalt transport protein CbiM from Moorella thermoacetica (strain ATCC 39073 / JCM 9320).